Reading from the N-terminus, the 773-residue chain is MDVTSSSGGGDPRQIEETKPLLGSDVSGPEGTKVMGAVPCRRALLLCNGMRYKLLQEGDIQVCVIRHPRTFLSKILTSKFLRRWEPHHLTLADNSLASATPSGYMENSVSYSAIEDVQPLSWENAPKYCLQLTIPGGTVLLQAANSYLRDQWFHSLQWKKKIYKYKKVLSNPSRWEVVLKEIRTLVDMALTSPLQDDSINQAPLEIVSKLLSENTNLTTQEHENIIVAIAPLLENNHPPPDLCEFFCKHCRERPRSMVVIEVFTPVVQRILKHNMDFGKCPRLRLFTQEYILALNELNAGMEVVKKFIQSMHGPTGHCPHPRVLPNLVAVCLAAIYSCYEEFINSRDNSPSLKEIRNGCQQPCDRKPTLPLRLLHPSPDLVSQEATLSEPRLKSVVVASSEVHVEVERTSTAKPALTASTGNDSEPNLIDCLMVSPACGTMSIELGPQAGRTLGCHVEILKLLSDYDDWRPSLASLLQPIPFPKEALAHEKFTKELKYVIQRFAEDPRQEVHSCLLSVRAGKDGWFQLYSPGGVACDDDGELFASMVHILMGSCYKTKKFLLSLAENKLGPCMLLALRGNQTMAEILCLMLEYNIIDNNDTQLQIISTLESTDVGKRMYEQLCDRQRELKELQRKGGPTRLTLPSKSTDADLARLLSSGSFGNLENLSLAFTNVTSACAEHLIKLPSLKQLNLWSTQFGDAGLRLLSEHLTMLQVLNLCETPVTDAGLLALSSMKSLCSLNMNSTKLSADTYEDLKAKLPNLKEVDVRYTEAW.

A disordered region spans residues 1–28 (MDVTSSSGGGDPRQIEETKPLLGSDVSG). The region spanning 54 to 163 (LLQEGDIQVC…HSLQWKKKIY (110 aa)) is the PH domain. 4 positions are modified to phosphoserine: Ser349, Ser377, Ser382, and Ser660. LRR repeat units lie at residues 663–686 (NLENLSLAFTNVTSACAEHLIKLP), 687–707 (SLKQLNLWSTQFGDAGLRLLS), 712–732 (MLQVLNLCETPVTDAGLLALS), and 736–756 (SLCSLNMNSTKLSADTYEDLK).

As to quaternary structure, interacts with FLNA.

The protein resides in the nucleus. Its subcellular location is the cytoplasm. Plays a role in T-cell signaling pathway. In Mus musculus (Mouse), this protein is C-Maf-inducing protein (Cmip).